Reading from the N-terminus, the 234-residue chain is Ribonuclease HII (234 aa).

Residues 16–207 (ALVAGVDEAG…VRRMLTPKAI (192 aa)) enclose the RNase H type-2 domain. Residues Asp-22, Glu-23, and Asp-115 each contribute to the a divalent metal cation site.

It belongs to the RNase HII family. Mn(2+) is required as a cofactor. Mg(2+) serves as cofactor.

It localises to the cytoplasm. It carries out the reaction Endonucleolytic cleavage to 5'-phosphomonoester.. Endonuclease that specifically degrades the RNA of RNA-DNA hybrids. The sequence is that of Ribonuclease HII from Xylella fastidiosa (strain M23).